The chain runs to 141 residues: Putative RING-H2 finger protein ATL62 (141 aa).

Residues 14–32 (FFAILTVFYSIFRCCLAYC) form a helical membrane-spanning segment. The RING-type; degenerate zinc finger occupies 79-121 (CVVCLSKFIDEDKARVLPSCNHCFHFDFTDTWLHSDYTCPNCR).

This sequence belongs to the RING-type zinc finger family. ATL subfamily.

Its subcellular location is the membrane. The catalysed reaction is S-ubiquitinyl-[E2 ubiquitin-conjugating enzyme]-L-cysteine + [acceptor protein]-L-lysine = [E2 ubiquitin-conjugating enzyme]-L-cysteine + N(6)-ubiquitinyl-[acceptor protein]-L-lysine.. It participates in protein modification; protein ubiquitination. The polypeptide is Putative RING-H2 finger protein ATL62 (ATL62) (Arabidopsis thaliana (Mouse-ear cress)).